The chain runs to 117 residues: Mitochondrial import inner membrane translocase subunit Tim10B (117 aa).

The short motif at 22-46 (CFSRCVDNLSQRDLGGHEDLCVDRC) is the Twin CX3C motif element. Intrachain disulfides connect Cys22/Cys46 and Cys26/Cys42. Residues 75-97 (EMEENARKAEQQQREQEKERLKE) are compositionally biased toward basic and acidic residues. The interval 75–117 (EMEENARKAEQQQREQEKERLKEAAATAVLTPVQPPVAGNLSM) is disordered.

Belongs to the small Tim family. In terms of assembly, component of the TIM22 complex, whose core is composed of Tim22, associated with peripheral protein Tim9b/Tim10b and the 70 kDa heterohexamer. In most cases, the 70 kDa complex is composed of TIMM9 and TIMM10.

Its subcellular location is the mitochondrion inner membrane. Its function is as follows. Component of the TIM22 complex, a complex that mediates the import and insertion of multi-pass transmembrane proteins into the mitochondrial inner membrane. The TIM22 complex forms a twin-pore translocase that uses the membrane potential as the external driving force. In the TIM22 complex, it may act as a docking point for the soluble 70 kDa complex that guides the target proteins in transit through the aqueous mitochondrial intermembrane space. This Drosophila melanogaster (Fruit fly) protein is Mitochondrial import inner membrane translocase subunit Tim10B (Tim9b).